A 56-amino-acid polypeptide reads, in one-letter code: MICYNHQSSEPPTTKTCSEGQCYKKSWSDHRGTIIERGCACPNVKPGVKIICCRSC.

Intrachain disulfides connect Cys-3-Cys-22, Cys-17-Cys-39, Cys-41-Cys-52, and Cys-53-Cys-56.

This sequence belongs to the three-finger toxin family. Short-chain subfamily. Type I alpha-neurotoxin sub-subfamily. As to expression, expressed by the venom gland.

It localises to the secreted. Its function is as follows. Binds to muscle nicotinic acetylcholine receptor (nAChR) and inhibit acetylcholine from binding to the receptor, thereby impairing neuromuscular transmission. The protein is Frontoxin I of Micrurus frontalis (Coral snake).